The chain runs to 517 residues: 2-isopropylmalate synthase (517 aa).

The 263-residue stretch at 7 to 269 (VIIFDTTLRD…ETGIDTTQIV (263 aa)) folds into the Pyruvate carboxyltransferase domain. Positions 16, 204, 206, and 240 each coordinate Mn(2+). A required for the condensation reaction. Not required to bind substrate region spans residues 366–517 (LADKKREIFD…KPKAQGSGTI (152 aa)). A regulatory domain region spans residues 395–517 (KFISQKISTE…KPKAQGSGTI (123 aa)).

The protein belongs to the alpha-IPM synthase/homocitrate synthase family. LeuA type 1 subfamily. In terms of assembly, homodimer. Remains a homodimer in the presence of L-leucine. The cofactor is Mn(2+).

It localises to the cytoplasm. The catalysed reaction is 3-methyl-2-oxobutanoate + acetyl-CoA + H2O = (2S)-2-isopropylmalate + CoA + H(+). It participates in amino-acid biosynthesis; L-leucine biosynthesis; L-leucine from 3-methyl-2-oxobutanoate: step 1/4. With respect to regulation, inhibited by 3-bromo substituents and Leu, the pathway end product. Functionally, catalyzes the condensation of the acetyl group of acetyl-CoA with 3-methyl-2-oxobutanoate (2-ketoisovalerate) to form 3-carboxy-3-hydroxy-4-methylpentanoate (2-isopropylmalate). Complements an E.coli deletion. The chain is 2-isopropylmalate synthase from Neisseria meningitidis serogroup B (strain ATCC BAA-335 / MC58).